A 312-amino-acid chain; its full sequence is Olfactory receptor 2C1 (312 aa).

Residues Met1 to Glu24 lie on the Extracellular side of the membrane. Asn6 is a glycosylation site (N-linked (GlcNAc...) asparagine). A helical transmembrane segment spans residues Ile25 to Leu48. The Cytoplasmic segment spans residues Ser49–Thr57. The helical transmembrane segment at Pro58–Pro79 threads the bilayer. Residues Gln80–Gln100 lie on the Extracellular side of the membrane. A disulfide bond links Cys97 and Cys189. The chain crosses the membrane as a helical span at residues Leu101–Phe120. Residues Asp121–Arg139 lie on the Cytoplasmic side of the membrane. Residues Leu140–Ser160 form a helical membrane-spanning segment. Residues Thr161–Asn200 are Extracellular-facing. A helical membrane pass occupies residues Gly201–Ala222. Residues Gln223–Lys236 are Cytoplasmic-facing. The helical transmembrane segment at Ala237–Leu261 threads the bilayer. Over Pro262–Lys272 the chain is Extracellular. Residues Phe273–Leu292 form a helical membrane-spanning segment. Residues Arg293–Ser312 lie on the Cytoplasmic side of the membrane.

The protein belongs to the G-protein coupled receptor 1 family. In terms of tissue distribution, olfactory epithelium. Present in various subcellular compartments of the olfactory sensory neurons, particularly in the axonal processes and neve terminals.

The protein resides in the cell membrane. In terms of biological role, olfactory receptor that is activated by the binding of organosulfur odorants with thioether groups such as (methylthio)methanetiol (MTMT). Also binds odorants acetophenone and benzaldehyde. The activity of this receptor is mediated by G proteins which activate adenylyl cyclase. May be involved in the molecular processes underlying fasciculation and targeting of olfactory axons. This chain is Olfactory receptor 2C1, found in Mus musculus (Mouse).